A 571-amino-acid chain; its full sequence is DDB1- and CUL4-associated factor 11 homolog (571 aa).

The interval 51 to 75 is disordered; sequence RMKPNHSNDSDTDFSSDDEGCPKMT. Over residues 60–69 the composition is skewed to acidic residues; it reads SDTDFSSDDE. WD repeat units lie at residues 162–201, 266–305, 309–349, 357–396, 435–479, and 482–521; these read RVATKSFCTQYIQNGTKIVVASQDEKIRFYQRNPDKSKYR, RDHCAVFCVKFSDSSEQIVCGTSQYSIHVFDVEQRRRIRT, AHED…DGDV, GHRDGVTHVDSRQDERYLLSNSKDQTIKVWDLRKFSNMSG, GHSV…VSRR, and GHTAVVRECDWHPTENEIVSSAWDGVTTVWTWDERQEGVI.

The protein belongs to the WD repeat LEC14B family.

Its function is as follows. Involved in regulation of lifespan. Required for dopaminergic CEP neuron degeneration in response to Mn(2+). Inhibits the skn-1-mediated up-regulation of tatn-1. In Caenorhabditis elegans, this protein is DDB1- and CUL4-associated factor 11 homolog.